Consider the following 345-residue polypeptide: NADPH dehydrogenase (345 aa).

23–26 lines the FMN pocket; it reads SPMC. Residue Tyr-28 coordinates substrate. The FMN site is built by Ala-60 and Gln-102. Position 164 to 167 (164 to 167) interacts with substrate; that stretch reads HGAH. Residues Arg-215 and 307–308 each bind FMN; that span reads GR.

This sequence belongs to the NADH:flavin oxidoreductase/NADH oxidase family. NamA subfamily. Homotetramer. Requires FMN as cofactor.

It catalyses the reaction A + NADPH + H(+) = AH2 + NADP(+). Functionally, catalyzes the reduction of the double bond of an array of alpha,beta-unsaturated aldehydes and ketones. It also reduces the nitro group of nitroester and nitroaromatic compounds. It could have a role in detoxification processes. This chain is NADPH dehydrogenase, found in Bacillus mycoides (strain KBAB4) (Bacillus weihenstephanensis).